The sequence spans 689 residues: Glycine--tRNA ligase beta subunit (689 aa).

This sequence belongs to the class-II aminoacyl-tRNA synthetase family. As to quaternary structure, tetramer of two alpha and two beta subunits.

The protein localises to the cytoplasm. It carries out the reaction tRNA(Gly) + glycine + ATP = glycyl-tRNA(Gly) + AMP + diphosphate. This chain is Glycine--tRNA ligase beta subunit, found in Salmonella arizonae (strain ATCC BAA-731 / CDC346-86 / RSK2980).